The primary structure comprises 182 residues: Ribosome-recycling factor (182 aa).

A disordered region spans residues 136–158 (IKKQEKEGDLSEDQSRDEQDQVQ).

Belongs to the RRF family.

It is found in the cytoplasm. In terms of biological role, responsible for the release of ribosomes from messenger RNA at the termination of protein biosynthesis. May increase the efficiency of translation by recycling ribosomes from one round of translation to another. This is Ribosome-recycling factor from Synechococcus sp. (strain CC9311).